The sequence spans 2541 residues: Talin-1 (2541 aa).

The 318-residue stretch at 86-403 folds into the FERM domain; it reads RPLKIRMLDG…GYIDIILKKK (318 aa). A Phosphothreonine modification is found at T167. The interaction with LAYN stretch occupies residues 280–435; it reads FQAHKNCGQM…PKKSTVLQQQ (156 aa). Residues S405, S425, S446, S620, and S729 each carry the phosphoserine modification. Residues 482-655 form a helical bundle R1 region; the sequence is RGHMPPLTSA…QASGELLQQI (174 aa). A helical bundle R2 region spans residues 656–786; sequence GESDTDPHFQ…ALNELLQHVK (131 aa). Positions 787-911 are helical bundle R3; the sequence is AHATGAGPAG…NAAAQNAIKK (125 aa). The interval 913-1044 is helical bundle R4; sequence LVQRLEHAAK…RTAAQKAQEA (132 aa). S1021 is subject to Phosphoserine. The interval 1046 to 1206 is helical bundle R5; it reads GPLEMDSALS…NRCVSCLPGQ (161 aa). Position 1116 is a phosphotyrosine (Y1116). T1142 is subject to Phosphothreonine. 2 positions are modified to phosphoserine: S1201 and S1225. The segment at 1207–1357 is helical bundle R6; sequence RDVDNALRAV…QLITMCTQQA (151 aa). T1263 is modified (phosphothreonine). S1323 is subject to Phosphoserine. Positions 1327–1948 are interaction with SYNM; that stretch reads AAPNLKSQLA…CSPSDAYTKK (622 aa). The helical bundle R7A stretch occupies residues 1358–1453; the sequence is PGQKECDNAL…AYLVGVSDPN (96 aa). The segment at 1359 to 1659 is interaction with VCL and F-actin; it reads GQKECDNALR…SMRDKAPGQL (301 aa). The interval 1461 to 1580 is helical bundle R8; sequence LVEPTQFARA…NLSAFASNPE (120 aa). K1544 is subject to N6-acetyllysine. A helical bundle R7B region spans residues 1581–1653; that stretch reads FSSIPAQISP…IKKLITSMRD (73 aa). The helical bundle R9 stretch occupies residues 1655–1822; that stretch reads APGQLECETA…TLNEAASAAG (168 aa). The segment at 1823 to 1973 is helical bundle R10; it reads VVGGMVDSIT…VLAALQAGNR (151 aa). S1849 carries the phosphoserine modification. T1855 carries the post-translational modification Phosphothreonine. A Phosphoserine modification is found at S1878. The segment at 1974–2140 is helical bundle R11; the sequence is GTQACITAAS…TVKAVEDEAT (167 aa). N6-acetyllysine is present on K2031. Phosphoserine is present on S2040. K2115 bears the N6-acetyllysine mark. The segment at 2141 to 2294 is helical bundle R12; sequence KGTRALEATT…QAAEAMKGTE (154 aa). The I/LWEQ domain occupies 2293 to 2533; the sequence is TEWVDPEDPT…QIRQQQYKFL (241 aa). The interval 2300–2482 is helical bundle R13; the sequence is DPTVIAENEL…AAQKAAAFEE (183 aa).

As to quaternary structure, part of a complex composed of THSD1, PTK2/FAK1, TLN1 and VCL. Interacts with THSD1; this promotes interaction with PTK2/FAK1 and VCL. Binds with high affinity to VCL and with low affinity to integrins. Interacts with APBB1IP; this inhibits VCL binding. Interacts with PTK2/FAK1. Interacts with PIP5K1C and NRAP. Interacts with LAYN. Interacts with SYNM. Interacts with ITGB1; the interaction is prevented by competitive binding of ITGB1BP1. Interacts with SVEP1. Interacts (via R7 domain) with KANK1 or KANK2 (via KN motif); this interaction likely initiates the assembly of cortical microtubule stabilization complexes (CMSCs) at the vicinity of focal adhesions. Interacts with VCL; shows reduced VCL binding compared to isoform 2. Interacts with APBB1IP; shows similar level of binding compared to isoform 2. In terms of assembly, interacts with VCL; shows enhanced VCL binding compared to isoform 1. Interacts with APBB1IP; shows similar level of binding compared to isoform 1. As to quaternary structure, (Microbial infection) Interacts with human cytomegalovirus protein UL135. In terms of tissue distribution, expressed at low to non-detectable levels in many tissues but highly expressed in skin and pancreas with other tissues including kidney cortex, endocervix, testis, pituitary, liver, and spleen also showing robust expression.

Its subcellular location is the cell projection. The protein localises to the ruffle membrane. The protein resides in the cytoplasm. It is found in the cytoskeleton. It localises to the cell surface. Its subcellular location is the cell junction. The protein localises to the focal adhesion. Its function is as follows. High molecular weight cytoskeletal protein concentrated at regions of cell-matrix and cell-cell contacts. Involved in connections of major cytoskeletal structures to the plasma membrane. With KANK1 co-organize the assembly of cortical microtubule stabilizing complexes (CMSCs) positioned to control microtubule-actin crosstalk at focal adhesions (FAs) rims. The protein is Talin-1 (TLN1) of Homo sapiens (Human).